Consider the following 70-residue polypeptide: MKNQFAVLLVALVLLQLFSQSEAFWSTLLSIGKSLLGKRGLRNFDLEQMDDTYEPELSEADLRYLQDLLR.

An N-terminal signal peptide occupies residues M1–A23. L36 carries the leucine amide modification. Residues G37 to R70 constitute a propeptide that is removed on maturation.

Belongs to the non-disulfide-bridged peptide (NDBP) superfamily. Short antimicrobial peptide (group 4) family. In terms of tissue distribution, expressed by the venom gland.

It localises to the secreted. It is found in the target cell membrane. Its function is as follows. Antimicrobial peptide with potent activity against bacteria S.aureus (MIC=4.7 uM) and E.coli (MIC=31.5 uM), and pathogenic yeasts C.albicans (MIC=25 uM) and C.glabrata (MIC=12.5 uM). Is not very effective against P.aeruginosa (MIC=150 and &gt;300 uM). Also provokes moderate hemolysis on human erythrocytes (HC(50)=10.5 uM). The chain is Antimicrobial peptide VpCT1 from Mesomexovis punctatus (Scorpion).